Here is a 130-residue protein sequence, read N- to C-terminus: MAQVQYAGTGRRKNSVARVRLVPGTGKITMNGKDVRDYLPYENLITDLSQPFGITETTGSYDVLVNVNGGGFSGQAGATRHGIARALLTVDPDFRGPLKKAGMLTRDPRMKERKKYGLKKARKASQFSKR.

The tract at residues 98–130 is disordered; that stretch reads LKKAGMLTRDPRMKERKKYGLKKARKASQFSKR. Positions 111-130 are enriched in basic residues; sequence KERKKYGLKKARKASQFSKR.

It belongs to the universal ribosomal protein uS9 family.

The protein is Small ribosomal subunit protein uS9 of Lacticaseibacillus casei (strain BL23) (Lactobacillus casei).